Consider the following 160-residue polypeptide: Phosphopantetheine adenylyltransferase (160 aa).

S9 lines the substrate pocket. ATP is bound by residues 9–10 (SF) and H17. Substrate is bound by residues K41, L73, and K87. ATP-binding positions include 88–90 (GLR), E98, and 123–129 (YGYLSSS).

It belongs to the bacterial CoaD family. In terms of assembly, homohexamer. Mg(2+) serves as cofactor.

It localises to the cytoplasm. It carries out the reaction (R)-4'-phosphopantetheine + ATP + H(+) = 3'-dephospho-CoA + diphosphate. It participates in cofactor biosynthesis; coenzyme A biosynthesis; CoA from (R)-pantothenate: step 4/5. Functionally, reversibly transfers an adenylyl group from ATP to 4'-phosphopantetheine, yielding dephospho-CoA (dPCoA) and pyrophosphate. This Caldanaerobacter subterraneus subsp. tengcongensis (strain DSM 15242 / JCM 11007 / NBRC 100824 / MB4) (Thermoanaerobacter tengcongensis) protein is Phosphopantetheine adenylyltransferase.